The following is a 213-amino-acid chain: Uracil phosphoribosyltransferase (213 aa).

5-phospho-alpha-D-ribose 1-diphosphate contacts are provided by residues R78, R103, and 130–138; that span reads DPMLATGGS. Uracil is bound by residues I193 and 198–200; that span reads GDA. Position 199 (D199) interacts with 5-phospho-alpha-D-ribose 1-diphosphate.

This sequence belongs to the UPRTase family. Requires Mg(2+) as cofactor.

It catalyses the reaction UMP + diphosphate = 5-phospho-alpha-D-ribose 1-diphosphate + uracil. Its pathway is pyrimidine metabolism; UMP biosynthesis via salvage pathway; UMP from uracil: step 1/1. Its activity is regulated as follows. Allosterically activated by GTP. Its function is as follows. Catalyzes the conversion of uracil and 5-phospho-alpha-D-ribose 1-diphosphate (PRPP) to UMP and diphosphate. The protein is Uracil phosphoribosyltransferase of Bordetella bronchiseptica (strain ATCC BAA-588 / NCTC 13252 / RB50) (Alcaligenes bronchisepticus).